The following is a 328-amino-acid chain: Lipoyl synthase (328 aa).

7 residues coordinate [4Fe-4S] cluster: Cys-56, Cys-61, Cys-67, Cys-82, Cys-86, Cys-89, and Ser-298. The Radical SAM core domain maps to 68–287 (WEDREATFLI…KEEAEEIGFS (220 aa)).

It belongs to the radical SAM superfamily. Lipoyl synthase family. The cofactor is [4Fe-4S] cluster.

The protein localises to the cytoplasm. It catalyses the reaction [[Fe-S] cluster scaffold protein carrying a second [4Fe-4S](2+) cluster] + N(6)-octanoyl-L-lysyl-[protein] + 2 oxidized [2Fe-2S]-[ferredoxin] + 2 S-adenosyl-L-methionine + 4 H(+) = [[Fe-S] cluster scaffold protein] + N(6)-[(R)-dihydrolipoyl]-L-lysyl-[protein] + 4 Fe(3+) + 2 hydrogen sulfide + 2 5'-deoxyadenosine + 2 L-methionine + 2 reduced [2Fe-2S]-[ferredoxin]. Its pathway is protein modification; protein lipoylation via endogenous pathway; protein N(6)-(lipoyl)lysine from octanoyl-[acyl-carrier-protein]: step 2/2. Its function is as follows. Catalyzes the radical-mediated insertion of two sulfur atoms into the C-6 and C-8 positions of the octanoyl moiety bound to the lipoyl domains of lipoate-dependent enzymes, thereby converting the octanoylated domains into lipoylated derivatives. The sequence is that of Lipoyl synthase from Streptomyces avermitilis (strain ATCC 31267 / DSM 46492 / JCM 5070 / NBRC 14893 / NCIMB 12804 / NRRL 8165 / MA-4680).